The following is a 521-amino-acid chain: (+)-kolavenyl diphosphate synthase (521 aa).

Mg(2+)-binding residues include D311 and D313. The short motif at 311–314 (DGDD) is the DXDD motif element.

The protein belongs to the terpene synthase family. Mg(2+) is required as a cofactor.

The enzyme catalyses (2E,6E,10E)-geranylgeranyl diphosphate = (+)-kolavenyl diphosphate. Involved in the biosynthesis of (+)-O-methylkolavelool. Catalyzes the conversion of geranylgeranyl diphosphate into (+)-kolavenyl diphosphate. The protein is (+)-kolavenyl diphosphate synthase of Herpetosiphon aurantiacus (strain ATCC 23779 / DSM 785 / 114-95).